Consider the following 553-residue polypeptide: Glucose-6-phosphate isomerase (553 aa).

Residue Glu-357 is the Proton donor of the active site. Active-site residues include His-388 and Lys-514. Residues 524–553 are disordered; it reads ITGAGSPPPQSDSSTDGLVRRYRTERGRAG. Residues 541 to 553 show a composition bias toward basic and acidic residues; it reads LVRRYRTERGRAG.

It belongs to the GPI family.

The protein localises to the cytoplasm. It catalyses the reaction alpha-D-glucose 6-phosphate = beta-D-fructose 6-phosphate. It functions in the pathway carbohydrate biosynthesis; gluconeogenesis. Its pathway is carbohydrate degradation; glycolysis; D-glyceraldehyde 3-phosphate and glycerone phosphate from D-glucose: step 2/4. Its function is as follows. Catalyzes the reversible isomerization of glucose-6-phosphate to fructose-6-phosphate. In Mycobacterium bovis (strain BCG / Tokyo 172 / ATCC 35737 / TMC 1019), this protein is Glucose-6-phosphate isomerase.